The following is a 405-amino-acid chain: Argininosuccinate synthase (405 aa).

ATP contacts are provided by residues 10–18 (AYSGGLDTS) and alanine 37. Positions 88 and 93 each coordinate L-citrulline. Glycine 118 is an ATP binding site. Threonine 120, asparagine 124, and aspartate 125 together coordinate L-aspartate. An L-citrulline-binding site is contributed by asparagine 124. Residues arginine 128, serine 179, serine 188, glutamate 264, and tyrosine 276 each coordinate L-citrulline.

It belongs to the argininosuccinate synthase family. Type 1 subfamily. As to quaternary structure, homotetramer.

Its subcellular location is the cytoplasm. The enzyme catalyses L-citrulline + L-aspartate + ATP = 2-(N(omega)-L-arginino)succinate + AMP + diphosphate + H(+). It functions in the pathway amino-acid biosynthesis; L-arginine biosynthesis; L-arginine from L-ornithine and carbamoyl phosphate: step 2/3. In Nitrosococcus oceani (strain ATCC 19707 / BCRC 17464 / JCM 30415 / NCIMB 11848 / C-107), this protein is Argininosuccinate synthase.